A 1941-amino-acid polypeptide reads, in one-letter code: Myosin-7B (1941 aa).

The Myosin N-terminal SH3-like domain occupies 30 to 80; that stretch reads DGKKRVWVPDEQDAYVEAEVKTEATGGKVTVETKDQKVLTVRETEMQPMNP. Residues 84–785 form the Myosin motor domain; that stretch reads DLLEDMAMMT…LLGILEELRD (702 aa). 177-184 serves as a coordination point for ATP; that stretch reads GESGAGKT. Actin-binding stretches follow at residues 662-684 and 764-778; these read LNKLMTNLRATQPHFVRCIVPNE and QFGHTKVFFKAGLLG. In terms of domain architecture, IQ spans 788–817; it reads LAKVLTLLQARSRGRLMRLEYQRMLGGRDA. A coiled-coil region spans residues 846 to 1935; the sequence is LLRSAQAEEE…KLRARSRDAL (1090 aa). Residues 1887–1941 are disordered; that stretch reads RQFEEAEQQASTNLAKYRKAQHELDDAEERADMAETQANKLRARSRDALGPKHKE. Residues 1930–1941 are compositionally biased toward basic and acidic residues; that stretch reads RSRDALGPKHKE.

The protein belongs to the TRAFAC class myosin-kinesin ATPase superfamily. Myosin family. Muscle myosin is a hexameric protein that consists of 2 heavy chain subunits (MHC), 2 alkali light chain subunits (MLC) and 2 regulatory light chain subunits (MLC-2).

The protein localises to the membrane. Functionally, involved in muscle contraction. This chain is Myosin-7B (Myh7b), found in Mus musculus (Mouse).